The chain runs to 402 residues: Nicotinate phosphoribosyltransferase (402 aa).

Phosphohistidine; by autocatalysis is present on His224.

Belongs to the NAPRTase family. Transiently phosphorylated on a His residue during the reaction cycle. Phosphorylation strongly increases the affinity for substrates and increases the rate of nicotinate D-ribonucleotide production. Dephosphorylation regenerates the low-affinity form of the enzyme, leading to product release.

It carries out the reaction nicotinate + 5-phospho-alpha-D-ribose 1-diphosphate + ATP + H2O = nicotinate beta-D-ribonucleotide + ADP + phosphate + diphosphate. The protein operates within cofactor biosynthesis; NAD(+) biosynthesis; nicotinate D-ribonucleotide from nicotinate: step 1/1. Catalyzes the synthesis of beta-nicotinate D-ribonucleotide from nicotinate and 5-phospho-D-ribose 1-phosphate at the expense of ATP. In Neisseria meningitidis serogroup B (strain ATCC BAA-335 / MC58), this protein is Nicotinate phosphoribosyltransferase.